A 134-amino-acid chain; its full sequence is Large ribosomal subunit protein bL20 (134 aa).

This sequence belongs to the bacterial ribosomal protein bL20 family.

In terms of biological role, binds directly to 23S ribosomal RNA and is necessary for the in vitro assembly process of the 50S ribosomal subunit. It is not involved in the protein synthesizing functions of that subunit. The chain is Large ribosomal subunit protein bL20 from Rhizobium etli (strain ATCC 51251 / DSM 11541 / JCM 21823 / NBRC 15573 / CFN 42).